The chain runs to 503 residues: ESX-5 secretion system protein EccD5 (503 aa).

Helical transmembrane passes span 137–157 (IVAVQVGASMVATGVVLATGV), 169–189 (LTTIYTAVIGVLVLAVAMLLL), 200–220 (VADIMLMSAIMPVTVAAAAAP), 224–244 (VGSPQAVLGFGVLTVAAALAL), 250–270 (RLGIYTTIVIIGALTMLAALA), 272–292 (MVAATSAVTLLSSLLLICVVA), 359–379 (FLSGLLTGLGVMVVVCMTSLC), 382–402 (HTGQRWLPLILAGFTSGFLLL), 413–433 (SITLAGTAVIIAAAVCVRYAL), 439–459 (LAVSIVAAILVLLPAAGMAAA), and 480–500 (YLCLMPIFPLALWLMNVYAAI).

This sequence belongs to the EccD/Snm4 family. As to quaternary structure, part of the ESX-5 / type VII secretion system (T7SS), which is composed of cytosolic and membrane components. The ESX-5 membrane complex is composed of EccB5, EccC5, EccD5 and EccE5.

It localises to the cell inner membrane. Functionally, part of the ESX-5 specialized secretion system, which is responsible for the secretion of EsxN and a number of PE_PGRS and PPE proteins, including PPE41. In Mycobacterium tuberculosis (strain CDC 1551 / Oshkosh), this protein is ESX-5 secretion system protein EccD5.